Reading from the N-terminus, the 427-residue chain is Mitochondrial distribution and morphology protein 12 (427 aa).

The region spanning 1–387 (MSFDINWNQL…WPSWICIDMN (387 aa)) is the SMP-LTD domain. The segment covering 81-96 (NDSKDEHLKNHGDGIN) has biased composition (basic and acidic residues). 2 disordered regions span residues 81 to 168 (NDSK…APPL) and 387 to 427 (NDDD…EAGE). A compositionally biased stretch (acidic residues) spans 106 to 133 (LDDEDEDDEDDDEDDEDEEEEDEDDYDD). Positions 146–161 (LNFNENSTTPSANSFA) are enriched in polar residues. Acidic residues predominate over residues 387–402 (NDDDDEEEEEESEDND). The span at 411-427 (NDGKHGDGRTDETEAGE) shows a compositional bias: basic and acidic residues.

This sequence belongs to the MDM12 family. Component of the ER-mitochondria encounter structure (ERMES) or MDM complex, composed of MMM1, MDM10, MDM12 and MDM34. An MMM1 homodimer associates with one molecule of MDM12 on each side in a pairwise head-to-tail manner, and the SMP-LTD domains of MMM1 and MDM12 generate a continuous hydrophobic tunnel for phospholipid trafficking.

It is found in the mitochondrion outer membrane. Its subcellular location is the endoplasmic reticulum membrane. In terms of biological role, component of the ERMES/MDM complex, which serves as a molecular tether to connect the endoplasmic reticulum (ER) and mitochondria. Components of this complex are involved in the control of mitochondrial shape and protein biogenesis, and function in nonvesicular lipid trafficking between the ER and mitochondria. MDM12 is required for the interaction of the ER-resident membrane protein MMM1 and the outer mitochondrial membrane-resident beta-barrel protein MDM10. The MDM12-MMM1 subcomplex functions in the major beta-barrel assembly pathway that is responsible for biogenesis of all mitochondrial outer membrane beta-barrel proteins, and acts in a late step after the SAM complex. The MDM10-MDM12-MMM1 subcomplex further acts in the TOM40-specific pathway after the action of the MDM12-MMM1 complex. Essential for establishing and maintaining the structure of mitochondria and maintenance of mtDNA nucleoids. In Candida albicans (strain WO-1) (Yeast), this protein is Mitochondrial distribution and morphology protein 12.